A 335-amino-acid chain; its full sequence is Putative zinc metalloprotease CPE1693 (335 aa).

Histidine 17 is a Zn(2+) binding site. The active site involves glutamate 18. Histidine 21 serves as a coordination point for Zn(2+). A run of 3 helical transmembrane segments spans residues 88 to 110 (ILVM…IGLA), 262 to 284 (LLWF…FPAL), and 312 to 334 (TVGF…IFPI). The PDZ domain maps to 96-174 (FMNYVLALII…PVELEIKRGN (79 aa)).

Belongs to the peptidase M50B family. Zn(2+) serves as cofactor.

The protein localises to the cell membrane. The sequence is that of Putative zinc metalloprotease CPE1693 from Clostridium perfringens (strain 13 / Type A).